The sequence spans 41 residues: Putative toxic protein TimP (41 aa).

At Met1–Leu17 the chain is embedded in the membrane.

Belongs to the TimP toxin family.

It is found in the cell inner membrane. Putative toxic component of a potential type I toxin-antitoxin (TA) system. Neutralized by sRNA antitoxin TimR which binds to the 5' UTR of timP mRNA and inhibits translation. The antitoxin gene is encoded immediately upstream and transcribed divergently from the toxin gene; antitoxin RNA is less stable than timP mRNA. In Escherichia coli (strain K12), this protein is Putative toxic protein TimP.